Here is a 74-residue protein sequence, read N- to C-terminus: Male-specific sperm protein Mst84Db (74 aa).

Belongs to the MST(3)CGP family. As to expression, testis.

The sequence is that of Male-specific sperm protein Mst84Db (Mst84Db) from Drosophila melanogaster (Fruit fly).